The following is a 156-amino-acid chain: MPRKGPAPKRPLINDPVYGSPLVTQLVNKILLDGKKSTAERIVYQALEQAREKTGTDPVVTLKRALDNVKPALEVRSRRVGGATYQVPVEVRPGRSTTLALRWLVTFSRARREKTMVERLANELLDASNGLGAAVKRREDTHKMAEANKAFAHYRW.

The protein belongs to the universal ribosomal protein uS7 family. As to quaternary structure, part of the 30S ribosomal subunit. Contacts proteins S9 and S11.

Functionally, one of the primary rRNA binding proteins, it binds directly to 16S rRNA where it nucleates assembly of the head domain of the 30S subunit. Is located at the subunit interface close to the decoding center, probably blocks exit of the E-site tRNA. In Rhodococcus erythropolis (strain PR4 / NBRC 100887), this protein is Small ribosomal subunit protein uS7.